The primary structure comprises 687 residues: Guanine-nucleotide exchange factor YEL1 (687 aa).

Residues 14–27 (YGVSQKGYNDNFSE) show a composition bias toward polar residues. 2 disordered regions span residues 14–35 (YGVS…LHGS) and 63–97 (AAND…TDQN). The SEC7 domain maps to 57–264 (ILQNKEAAND…SEYYKTLNET (208 aa)). Positions 73–83 (TTDTATAGTGT) are enriched in low complexity. Thr290 carries the post-translational modification Phosphothreonine. Phosphoserine is present on residues Ser293 and Ser299. A PH domain is found at 412–551 (ASRRTSLSYL…DCINFWAGRI (140 aa)).

This sequence belongs to the YEL1 family.

Its subcellular location is the cytoplasm. It localises to the cell membrane. The protein resides in the bud neck. The protein localises to the bud tip. In terms of biological role, guanine nucleotide exchange factor for ARF3 required for localization of ARF3 to the bud neck and tip and involved in actin patch polarization. This is Guanine-nucleotide exchange factor YEL1 (YEL1) from Saccharomyces cerevisiae (strain RM11-1a) (Baker's yeast).